Reading from the N-terminus, the 246-residue chain is Triosephosphate isomerase (246 aa).

A substrate-binding site is contributed by 9-11; that stretch reads NWK. Catalysis depends on His91, which acts as the Electrophile. Glu161 serves as the catalytic Proton acceptor. Residues Gly167, Ser206, and 227–228 contribute to the substrate site; that span reads GG.

Belongs to the triosephosphate isomerase family. Homodimer.

The protein resides in the cytoplasm. It catalyses the reaction D-glyceraldehyde 3-phosphate = dihydroxyacetone phosphate. The protein operates within carbohydrate biosynthesis; gluconeogenesis. It participates in carbohydrate degradation; glycolysis; D-glyceraldehyde 3-phosphate from glycerone phosphate: step 1/1. Functionally, involved in the gluconeogenesis. Catalyzes stereospecifically the conversion of dihydroxyacetone phosphate (DHAP) to D-glyceraldehyde-3-phosphate (G3P). The protein is Triosephosphate isomerase of Ruegeria sp. (strain TM1040) (Silicibacter sp.).